The following is a 147-amino-acid chain: Small ribosomal subunit protein bS6 (147 aa).

Positions 97 to 141 (EEGPSAMMRKADRDRERDDRGGGFRGDREGGFRGDRGPRRPREEA) are enriched in basic and acidic residues. Positions 97-147 (EEGPSAMMRKADRDRERDDRGGGFRGDREGGFRGDRGPRRPREEAPAVVEE) are disordered.

The protein belongs to the bacterial ribosomal protein bS6 family.

Functionally, binds together with bS18 to 16S ribosomal RNA. The polypeptide is Small ribosomal subunit protein bS6 (Nitrobacter hamburgensis (strain DSM 10229 / NCIMB 13809 / X14)).